Here is a 318-residue protein sequence, read N- to C-terminus: Phospho-N-acetylmuramoyl-pentapeptide-transferase (318 aa).

10 helical membrane-spanning segments follow: residues 5–25 (LKPL…VLAF), 50–70 (PTMG…VLAP), 71–91 (PSPL…IGLV), 115–135 (VLLG…GSVI), 139–159 (VTGW…LLLV), 173–193 (GLAA…ALTL), 198–218 (LVTF…YNFH), 222–242 (VFMG…LAIM), 248–268 (VLPV…LQVV), and 298–318 (VLFF…LLTI).

It belongs to the glycosyltransferase 4 family. MraY subfamily. Mg(2+) serves as cofactor.

The protein resides in the cell membrane. It carries out the reaction UDP-N-acetyl-alpha-D-muramoyl-L-alanyl-gamma-D-glutamyl-meso-2,6-diaminopimeloyl-D-alanyl-D-alanine + di-trans,octa-cis-undecaprenyl phosphate = di-trans,octa-cis-undecaprenyl diphospho-N-acetyl-alpha-D-muramoyl-L-alanyl-D-glutamyl-meso-2,6-diaminopimeloyl-D-alanyl-D-alanine + UMP. It participates in cell wall biogenesis; peptidoglycan biosynthesis. Its function is as follows. Catalyzes the initial step of the lipid cycle reactions in the biosynthesis of the cell wall peptidoglycan: transfers peptidoglycan precursor phospho-MurNAc-pentapeptide from UDP-MurNAc-pentapeptide onto the lipid carrier undecaprenyl phosphate, yielding undecaprenyl-pyrophosphoryl-MurNAc-pentapeptide, known as lipid I. The polypeptide is Phospho-N-acetylmuramoyl-pentapeptide-transferase (Moorella thermoacetica (strain ATCC 39073 / JCM 9320)).